Here is a 442-residue protein sequence, read N- to C-terminus: O-acetyl-L-homoserine sulfhydrylase (442 aa).

Residues 1–32 form a disordered region; sequence MVGPSGESMPRNFKPETIALHGGQEPDPTTTS. K216 carries the N6-(pyridoxal phosphate)lysine modification.

The protein belongs to the trans-sulfuration enzymes family. The cofactor is pyridoxal 5'-phosphate.

It carries out the reaction O-acetyl-L-homoserine + hydrogen sulfide = L-homocysteine + acetate. Its pathway is amino-acid biosynthesis; L-methionine biosynthesis via de novo pathway; L-homocysteine from O-acetyl-L-homoserine: step 1/1. With respect to regulation, feedback inhibited at very high concentrations of methionine or S-adenosylmethionine. In terms of biological role, catalyzes the conversion of O-acetyl-L-homoserine (OAH) into homocysteine in the methionine biosynthesis pathway. Can also use O-succinyl-homoserine (OSH), although at low efficiency. This is O-acetyl-L-homoserine sulfhydrylase from Leptospira meyeri.